Consider the following 295-residue polypeptide: NAD kinase (295 aa).

Catalysis depends on Asp73, which acts as the Proton acceptor. NAD(+) contacts are provided by residues 73–74 (DG), Arg78, 146–147 (NE), Lys157, Arg174, Asp176, and 187–192 (TAYSLS).

The protein belongs to the NAD kinase family. A divalent metal cation serves as cofactor.

It is found in the cytoplasm. The enzyme catalyses NAD(+) + ATP = ADP + NADP(+) + H(+). Its function is as follows. Involved in the regulation of the intracellular balance of NAD and NADP, and is a key enzyme in the biosynthesis of NADP. Catalyzes specifically the phosphorylation on 2'-hydroxyl of the adenosine moiety of NAD to yield NADP. This chain is NAD kinase, found in Wigglesworthia glossinidia brevipalpis.